The sequence spans 478 residues: Calcitonin receptor (478 aa).

Positions 1–22 are cleaved as a signal peptide; sequence MRFTFTRQFLAFFILISNPASI. Topologically, residues 23-146 are extracellular; sequence LPRSENLTFP…FTPEKLQNAY (124 aa). Asn-28, Asn-73, Asn-125, and Asn-130 each carry an N-linked (GlcNAc...) asparagine glycan. Intrachain disulfides connect Cys-55–Cys-81, Cys-72–Cys-112, and Cys-95–Cys-134. Residues 147-169 traverse the membrane as a helical segment; that stretch reads VLYYLAIVGHSMSIITLVVSLGI. The Cytoplasmic portion of the chain corresponds to 170 to 181; it reads FVYFRSLGCQRV. A helical membrane pass occupies residues 182–202; sequence TLHKNMFLTYILNSMIIIIHL. Topologically, residues 203-219 are extracellular; it reads VEVVPNGELVRKDPVSC. Cysteines 219 and 289 form a disulfide. A helical membrane pass occupies residues 220 to 242; it reads KILHFFHQYMMACNYFWMLCEGI. Residues 243–259 are Cytoplasmic-facing; that stretch reads YLHTLIVVSVFNEAKHL. A helical membrane pass occupies residues 260-280; sequence RWYYLLGWGFPLVPTTIHAIT. At 281-296 the chain is on the extracellular side; it reads RALYFNDNCWISVDTH. The helical transmembrane segment at 297-320 threads the bilayer; that stretch reads LLYIIHGPVMVALVVNFFFLLNIV. Residues 321–340 are Cytoplasmic-facing; it reads RVLVTKMRETHEAESYMYLK. The chain crosses the membrane as a helical span at residues 341 to 359; that stretch reads AVKATMILVPLLGIQFVVF. Over 360 to 367 the chain is Extracellular; sequence PWRPSNKV. The chain crosses the membrane as a helical span at residues 368–394; the sequence is LGKIYDYFMHSLIHFQGFFVATIYCFC. Residues 395–478 are Cytoplasmic-facing; that stretch reads NNEVQTTLKR…LNIIEKESSA (84 aa).

This sequence belongs to the G-protein coupled receptor 2 family. In terms of assembly, heterodimer of CALCR and RAMP1, RAMP2 or RAMP3; the receptor complexes function as AMYR1, AMYR2 and AMYR3 receptors, respectively, and respond to amylin/IAPP, calcitonin/CT and CGRP1 ligands. Interacts with GPRASP2.

It localises to the cell membrane. G protein-coupled receptor activated by ligand peptides amylin (IAPP), calcitonin (CT/CALCA) and calcitonin gene-related peptide type 1 (CGRP1/CALCA). CALCR interacts with receptor-activity-modifying proteins RAMP1, 2 and 3 to form receptor complexes AMYR1, 2 and 3, respectively. IAPP, CT and CGRP1 activate CALCR and AMYRs with distinct modes of receptor activation resulting in specific phenotypes. Ligand binding causes a conformation change that triggers signaling via guanine nucleotide-binding proteins (G proteins) and modulates the activity of downstream effectors. Activates cAMP-dependent pathway. The sequence is that of Calcitonin receptor from Cavia porcellus (Guinea pig).